The following is a 359-amino-acid chain: Phosphate acyltransferase (359 aa).

It belongs to the PlsX family. Homodimer. Probably interacts with PlsY.

The protein localises to the cytoplasm. The catalysed reaction is a fatty acyl-[ACP] + phosphate = an acyl phosphate + holo-[ACP]. Its pathway is lipid metabolism; phospholipid metabolism. Catalyzes the reversible formation of acyl-phosphate (acyl-PO(4)) from acyl-[acyl-carrier-protein] (acyl-ACP). This enzyme utilizes acyl-ACP as fatty acyl donor, but not acyl-CoA. This chain is Phosphate acyltransferase, found in Salmonella heidelberg (strain SL476).